We begin with the raw amino-acid sequence, 466 residues long: Asparagine--tRNA ligase (466 aa).

The protein belongs to the class-II aminoacyl-tRNA synthetase family. Homodimer.

The protein localises to the cytoplasm. It carries out the reaction tRNA(Asn) + L-asparagine + ATP = L-asparaginyl-tRNA(Asn) + AMP + diphosphate + H(+). The protein is Asparagine--tRNA ligase of Shewanella sp. (strain MR-7).